The sequence spans 86 residues: Small ribosomal subunit protein bS20 (86 aa).

The segment covering 1 to 11 (MANIKSAKKRA) has biased composition (basic residues). Residues 1 to 26 (MANIKSAKKRAITSEKNRQHNASRRS) form a disordered region.

It belongs to the bacterial ribosomal protein bS20 family.

In terms of biological role, binds directly to 16S ribosomal RNA. In Pseudoalteromonas translucida (strain TAC 125), this protein is Small ribosomal subunit protein bS20.